The sequence spans 37 residues: Large ribosomal subunit protein bL36c (37 aa).

Belongs to the bacterial ribosomal protein bL36 family.

The protein resides in the plastid. The protein localises to the chloroplast. In Chaetosphaeridium globosum (Charophycean green alga), this protein is Large ribosomal subunit protein bL36c.